The chain runs to 249 residues: ATP-dependent dethiobiotin synthetase BioD (249 aa).

11–16 is a binding site for ATP; it reads NVGKTI. Threonine 15 serves as a coordination point for Mg(2+). Lysine 31 is a catalytic residue. Threonine 35 lines the substrate pocket. ATP-binding positions include aspartate 40, 127-130, 188-189, and 215-217; these read EGAG, NS, and PYL. Aspartate 40 and glutamate 127 together coordinate Mg(2+).

The protein belongs to the dethiobiotin synthetase family. In terms of assembly, homodimer. It depends on Mg(2+) as a cofactor.

The protein localises to the cytoplasm. It carries out the reaction (7R,8S)-7,8-diammoniononanoate + CO2 + ATP = (4R,5S)-dethiobiotin + ADP + phosphate + 3 H(+). The protein operates within cofactor biosynthesis; biotin biosynthesis; biotin from 7,8-diaminononanoate: step 1/2. In terms of biological role, catalyzes a mechanistically unusual reaction, the ATP-dependent insertion of CO2 between the N7 and N8 nitrogen atoms of 7,8-diaminopelargonic acid (DAPA, also called 7,8-diammoniononanoate) to form a ureido ring. The chain is ATP-dependent dethiobiotin synthetase BioD from Neorickettsia sennetsu (strain ATCC VR-367 / Miyayama) (Ehrlichia sennetsu).